We begin with the raw amino-acid sequence, 360 residues long: Magnesium-protoporphyrin IX monomethyl ester [oxidative] cyclase (360 aa).

The segment at 1 to 20 (MVPPTAIAEASRSGGEPAIK) is disordered.

Belongs to the AcsF family. Fe cation serves as cofactor.

It carries out the reaction Mg-protoporphyrin IX 13-monomethyl ester + 3 NADPH + 3 O2 + 2 H(+) = 3,8-divinyl protochlorophyllide a + 3 NADP(+) + 5 H2O. It participates in porphyrin-containing compound metabolism; chlorophyll biosynthesis (light-independent). Catalyzes the formation of the isocyclic ring in chlorophyll biosynthesis. Mediates the cyclase reaction, which results in the formation of divinylprotochlorophyllide (Pchlide) characteristic of all chlorophylls from magnesium-protoporphyrin IX 13-monomethyl ester (MgPMME). The sequence is that of Magnesium-protoporphyrin IX monomethyl ester [oxidative] cyclase from Synechococcus sp. (strain RCC307).